The chain runs to 164 residues: ATP synthase subunit b 1 (164 aa).

Residues 8–28 (AETWVAVGFAILMVVFVYFGV) traverse the membrane as a helical segment.

The protein belongs to the ATPase B chain family. As to quaternary structure, F-type ATPases have 2 components, F(1) - the catalytic core - and F(0) - the membrane proton channel. F(1) has five subunits: alpha(3), beta(3), gamma(1), delta(1), epsilon(1). F(0) has three main subunits: a(1), b(2) and c(10-14). The alpha and beta chains form an alternating ring which encloses part of the gamma chain. F(1) is attached to F(0) by a central stalk formed by the gamma and epsilon chains, while a peripheral stalk is formed by the delta and b chains.

It is found in the cell inner membrane. F(1)F(0) ATP synthase produces ATP from ADP in the presence of a proton or sodium gradient. F-type ATPases consist of two structural domains, F(1) containing the extramembraneous catalytic core and F(0) containing the membrane proton channel, linked together by a central stalk and a peripheral stalk. During catalysis, ATP synthesis in the catalytic domain of F(1) is coupled via a rotary mechanism of the central stalk subunits to proton translocation. Its function is as follows. Component of the F(0) channel, it forms part of the peripheral stalk, linking F(1) to F(0). The chain is ATP synthase subunit b 1 from Rhodopseudomonas palustris (strain BisA53).